Reading from the N-terminus, the 609-residue chain is Pair-rule protein odd-paired (609 aa).

The disordered stretch occupies residues 20–41 (RMSPNTTASNSNAQQQQQQQLE). Over residues 22-32 (SPNTTASNSNA) the composition is skewed to polar residues. Residues 210-249 (MQCLWIDPDQPGLVPPGGRKTCNKVFHSMHEIVTHLTVEH) form a C2H2-type 1; atypical zinc finger. 4 consecutive C2H2-type zinc fingers follow at residues 258 to 285 (HACFWVGCSRNGRPFKAKYKLVNHIRVH), 291 to 315 (FACPHPGCGKVFARSENLKIHKRTH), 321 to 345 (FKCEHEGCDRRFANSSDRKKHSHVH), and 351 to 375 (YNCRINGCDKSYTHPSSLRKHMKVH). 2 disordered regions span residues 373 to 550 (KVHG…ASAS) and 583 to 609 (EAMNPLNHFGHHHHHHHLMHPGAATAY). Positions 399–409 (IITGGAQTPPS) are enriched in polar residues. Composition is skewed to low complexity over residues 414–434 (GSAGSSSGVSSLSGGSGIKSS) and 449–498 (HLGA…LTAH). Basic residues predominate over residues 528–537 (SHHHHPHHHQ). Residues 538 to 550 (AAPSPGAAAASAS) are compositionally biased toward low complexity. Over residues 591–601 (FGHHHHHHHLM) the composition is skewed to basic residues.

This sequence belongs to the GLI C2H2-type zinc-finger protein family. In terms of tissue distribution, expressed throughout all segment primordia; expressed ubiquitously in the ectoderm and mesoderm precursors.

The protein localises to the nucleus. In terms of biological role, transcription factor essential for parasegmental subdivision of the embryo. It is involved in the activation of wingless (wg) in odd parasegments. It is also required for the timely activation of wg in the remaining parasegments and for the timely activation of engrailed (en) in all parasegments. This chain is Pair-rule protein odd-paired (opa), found in Drosophila melanogaster (Fruit fly).